The sequence spans 1832 residues: MAATVYRPATAPIADAPCEGLVCLELEDGSAYQGYSFGAPKSIAGELVFQTGMVGYPESVTDPSYRGQILVITFPLVGNYGVPSRETVDDLLKDLPAHFESNQIHIAGLVTASYAGEDFSHFLATSSLGTWLKEQGIPAMYGVDTRALTKRIREKGSMLGRMLLQKEDLAVSAPSLGVPGDWKPHFETIEWVNPNEKNLVAEVSIKEPKLYKPDEATALKHPSGRNLRILCLDVGMKYNQLRCFIKRGVEVLVCPWDYDFSKEEYDGLFISNGPGDPKVMDTTVEHISAALQKNNTPIFGICLGHQLLARAAGAKTVKLKFGNRGHNIPCTSMVTGKCHITSQNHGYAVDATTLPTGWQELFINANDGSNEGIMHVDRPHFSVQFHPESTPGPRDTEFLFDVFIQTVAKCTTDNTLLQKGVEFPGGTTEENERLHPRVDVKKVLVLGSGGLSIGQAGEFDYSGSQAIKALKEEGIYTVLINPNIATIQTSKGLADKVYFLPVNAEFVRKVIKYEQPDAIYCTFGGQTALSVGIQLKDEFEALGVKVLGTPIDTIITTEDRELFARSMESIGEKCAKSASASSVEEALNAVKDIGYPVIVRAAYALGGLGSGFANNEAELVDLCNKALAASPQVLVERSMKGWKEIEYEVVRDAQDNCITVCNMENFDPLGIHTGDSIVVAPSQTLSDEDYNMLRTTAVNVIRHLGVVGECNIQYALNPFSREYCIIEVNARLSRSSALASKATGYPLAFIAAKLGLGIPLKEIKNTVTKVTCACFEPSLDYVVVKMPRWDLKKFTRVSTQLGSSMKSVGEVMSIGRTFEEAIQKAIRAIDFHNLGFSESKGALMSVDDELQTPSDQRLFAIANAMHAGYTVDRIWELTKIDKWFLSKLKGLSNFAKDMTKLTANDVVGRPDLLLRAKQLGFCDRQLANFWDSNELAIRRMRLEAGITPFVKQIDTVAAEFPAFTNYLYLTYNASEHDVSFEDRGVMVLGSGVYRIGSSVEFDWCSVRAIRTLRESGFKTIMVNYNPETVSTDYDEADKLYFENINLETVLDVYQMEDATGVLGAMGGQTPNNIALPLLRAGVRVLGTSPEMIDTAENRYKFSRMLDRIGVDQPTWKELTSFDEAKAFCQKVSYPVLVRPSYVLSGAAMNTVYSEADLESYLQQAADVSPEHPVVITKYIENAKEIEMDAVAKDGKVVGHFISEHVENAGVHSGDATLILPPQDLEQTTIQRIEEATRKIGAALNVTGPFNIQFIAKDNDIKVIECNVRASRSFPFVSKVMGVDLIEMATKAIMGLPFVEYPAIDRPSGGVGVKVPQFSFSRLSGADPVLGVEMASTGEVASFGVDKYEAYLKALMSTGFKVPKKNILLSIGSYKDKKEMLPSVAKLSQMGYKLFATAGTADFLQEHDIPVQFLEVLAKEDDQKSEYSLTQHLANNMIDLYINLPSNNRYRRPANYISKGYQTRRMAVDYQIPLVTNVKNAKILVEAIARYRDMEIGERDYQTSHTPLQLSGQVNFTLQDSLSRPHSFKKAHVLSVEQYTRADLHLLFTVAEEMRLSVQRGNVMDILKGRMLATLFYEPSTRTSASFEAAMKRLGGEVISIATQHSSVQKGETLQDTLRTLACYADAIVLRHPDETCVDVAKKYSPVPVVNAGNGSREHPTQAFLDLFTVREELGTVQGLTFTFVGDLRYGRPVHSLVYLLRHYSGVKVQLVSPKGLELPTDVRQQLVKAGQLLCESETLTPEILGKTDVLYCTRVQKERFPSEAEYEKVKGSYRIDNQTLKHAKSKMAIMHPLPRNEEIAEEVDFDQRAAYFRQMRYGLYCRMALLALVMSG.

Residues 2 to 400 (AATVYRPATA…PGPRDTEFLF (399 aa)) form a GATase (Glutamine amidotransferase) region. Positions 64, 273, and 275 each coordinate L-glutamine. In terms of domain architecture, Glutamine amidotransferase type-1 spans 228–413 (RILCLDVGMK…IQTVAKCTTD (186 aa)). The active-site Nucleophile; for GATase activity is Cys302. L-glutamine is bound by residues Leu303, Gln306, Asn344, Gly346, and Tyr347. Catalysis depends on for GATase activity residues His386 and Glu388. The segment at 401 to 442 (DVFIQTVAKCTTDNTLLQKGVEFPGGTTEENERLHPRVDVKK) is linker. The CPSase A stretch occupies residues 443–983 (VLVLGSGGLS…SEHDVSFEDR (541 aa)). The CPSase (Carbamoyl phosphate synthase) stretch occupies residues 443–1484 (VLVLGSGGLS…TNVKNAKILV (1042 aa)). The ATP site is built by Arg560, Arg600, Gly606, Gly607, Arg637, Met639, Glu644, Gly670, Ile671, His672, Gln713, and Glu727. ATP-grasp domains are found at residues 564–756 (ARSM…KLGL) and 1102–1293 (SRML…KAIM). The Mg(2+) site is built by Gln713, Glu727, and Asn729. Positions 713, 727, and 729 each coordinate Mn(2+). The CPSase B stretch occupies residues 984–1484 (GVMVLGSGVY…TNVKNAKILV (501 aa)). ATP is bound by residues Arg1138, Lys1177, Ile1179, Glu1184, Gly1209, Val1210, His1211, Ser1212, Gln1252, and Glu1264. The Mg(2+) site is built by Gln1252, Glu1264, and Asn1266. Gln1252, Glu1264, and Asn1266 together coordinate Mn(2+). One can recognise an MGS-like domain in the interval 1359–1507 (FKVPKKNILL…RDYQTSHTPL (149 aa)). The interval 1485-1528 (EAIARYRDMEIGERDYQTSHTPLQLSGQVNFTLQDSLSRPHSFK) is linker. Residues 1529 to 1832 (KAHVLSVEQY…MALLALVMSG (304 aa)) are ATCase (Aspartate transcarbamylase). Residues Arg1581 and Thr1582 each coordinate carbamoyl phosphate. Lys1609 contributes to the L-aspartate binding site. Positions 1630, 1658, and 1661 each coordinate carbamoyl phosphate. Arg1691 and Arg1754 together coordinate L-aspartate. Carbamoyl phosphate contacts are provided by Leu1793 and Pro1794.

It in the N-terminal section; belongs to the CarA family. In the central section; belongs to the CarB family. The protein in the C-terminal section; belongs to the aspartate/ornithine carbamoyltransferase superfamily. ATCase family. The cofactor is Mg(2+). Mn(2+) is required as a cofactor.

Its subcellular location is the cytoplasm. It localises to the nucleus. It carries out the reaction hydrogencarbonate + L-glutamine + 2 ATP + H2O = carbamoyl phosphate + L-glutamate + 2 ADP + phosphate + 2 H(+). It catalyses the reaction L-glutamine + H2O = L-glutamate + NH4(+). The catalysed reaction is hydrogencarbonate + NH4(+) + 2 ATP = carbamoyl phosphate + 2 ADP + phosphate + 2 H(+). The enzyme catalyses carbamoyl phosphate + L-aspartate = N-carbamoyl-L-aspartate + phosphate + H(+). It functions in the pathway pyrimidine metabolism; UMP biosynthesis via de novo pathway; (S)-dihydroorotate from bicarbonate: step 1/3. Its pathway is pyrimidine metabolism; UMP biosynthesis via de novo pathway; (S)-dihydroorotate from bicarbonate: step 2/3. Its activity is regulated as follows. Both CPSase and ATCase activities are feedback inhibited by the end product UTP. Functionally, multifunctional protein that encodes the first 2 enzymatic activities of the de novo pyrimidine pathway: carbamoylphosphate synthetase (CPSase; EC 6.3.5.5) and aspartate transcarbamylase (ATCase; EC 2.1.3.2). The CPSase-function is accomplished in 2 steps, by a glutamine-dependent amidotransferase activity (GATase) that binds and cleaves glutamine to produce ammonia, followed by an ammonium-dependent carbamoyl phosphate synthetase, which reacts with the ammonia, hydrogencarbonate and ATP to form carbamoyl phosphate. The endogenously produced carbamoyl phosphate is sequestered and channeled to the ATCase active site. ATCase then catalyzes the formation of carbamoyl-L-aspartate from L-aspartate and carbamoyl phosphate. The protein is Multifunctional protein pyr-3 (pyr-3) of Neurospora crassa (strain ATCC 24698 / 74-OR23-1A / CBS 708.71 / DSM 1257 / FGSC 987).